The primary structure comprises 266 residues: Glucosamine-6-phosphate deaminase (266 aa).

Catalysis depends on D72, which acts as the Proton acceptor; for enolization step. The active-site For ring-opening step is D141. H143 (proton acceptor; for ring-opening step) is an active-site residue. Catalysis depends on E148, which acts as the For ring-opening step.

Belongs to the glucosamine/galactosamine-6-phosphate isomerase family. NagB subfamily. As to quaternary structure, homohexamer.

It carries out the reaction alpha-D-glucosamine 6-phosphate + H2O = beta-D-fructose 6-phosphate + NH4(+). The protein operates within amino-sugar metabolism; N-acetylneuraminate degradation; D-fructose 6-phosphate from N-acetylneuraminate: step 5/5. Its activity is regulated as follows. Allosterically activated by N-acetylglucosamine 6-phosphate (GlcNAc6P). In terms of biological role, catalyzes the reversible isomerization-deamination of glucosamine 6-phosphate (GlcN6P) to form fructose 6-phosphate (Fru6P) and ammonium ion. The protein is Glucosamine-6-phosphate deaminase of Salmonella typhi.